A 467-amino-acid polypeptide reads, in one-letter code: Zinc finger and BTB domain-containing protein 43 (467 aa).

Position 1 is an N-acetylmethionine (methionine 1). Residues 33 to 97 (CDVSIVVQGH…SYTGRLVMPA (65 aa)) enclose the BTB domain. 2 disordered regions span residues 134-153 (LNHGSDHQSPSSSNYNGLVE) and 162-227 (HTDF…EFHY). Residues 140–149 (HQSPSSSNYN) are compositionally biased toward polar residues. Basic and acidic residues-rich tracts occupy residues 164-174 (DFPKAQELRDG) and 182-194 (KDELSSQVTEHEY). Glycyl lysine isopeptide (Lys-Gly) (interchain with G-Cter in SUMO2) cross-links involve residues lysine 182, lysine 247, lysine 297, and lysine 358. The C2H2-type 1; atypical zinc finger occupies 373–394 (YPCQCGKSFTHKSQRDRHMSMH). The C2H2-type 2 zinc-finger motif lies at 400–422 (YGCSVCGKKFKMKHHLVGHMKIH). A Phosphothreonine modification is found at threonine 423. Residues 428–450 (YECNICAKRFMWRDSFHRHVTSC) form a C2H2-type 3; atypical zinc finger. A Glycyl lysine isopeptide (Lys-Gly) (interchain with G-Cter in SUMO2) cross-link involves residue lysine 458.

The protein belongs to the krueppel C2H2-type zinc-finger protein family. As to quaternary structure, interacts with BDP1.

It localises to the nucleus. Its function is as follows. May be involved in transcriptional regulation. This Mus musculus (Mouse) protein is Zinc finger and BTB domain-containing protein 43 (Zbtb43).